The sequence spans 392 residues: Nicotinate phosphoribosyltransferase (392 aa).

H214 bears the Phosphohistidine; by autocatalysis mark.

This sequence belongs to the NAPRTase family. Post-translationally, transiently phosphorylated on a His residue during the reaction cycle. Phosphorylation strongly increases the affinity for substrates and increases the rate of nicotinate D-ribonucleotide production. Dephosphorylation regenerates the low-affinity form of the enzyme, leading to product release.

It catalyses the reaction nicotinate + 5-phospho-alpha-D-ribose 1-diphosphate + ATP + H2O = nicotinate beta-D-ribonucleotide + ADP + phosphate + diphosphate. The protein operates within cofactor biosynthesis; NAD(+) biosynthesis; nicotinate D-ribonucleotide from nicotinate: step 1/1. Functionally, catalyzes the synthesis of beta-nicotinate D-ribonucleotide from nicotinate and 5-phospho-D-ribose 1-phosphate at the expense of ATP. The sequence is that of Nicotinate phosphoribosyltransferase from Xanthomonas euvesicatoria pv. vesicatoria (strain 85-10) (Xanthomonas campestris pv. vesicatoria).